The following is a 125-amino-acid chain: Large ribosomal subunit protein bL12 (125 aa).

This sequence belongs to the bacterial ribosomal protein bL12 family. Homodimer. Part of the ribosomal stalk of the 50S ribosomal subunit. Forms a multimeric L10(L12)X complex, where L10 forms an elongated spine to which 2 to 4 L12 dimers bind in a sequential fashion. Binds GTP-bound translation factors.

Forms part of the ribosomal stalk which helps the ribosome interact with GTP-bound translation factors. Is thus essential for accurate translation. This Helicobacter pylori (strain P12) protein is Large ribosomal subunit protein bL12.